Consider the following 357-residue polypeptide: Membrane-bound lytic murein transglycosylase C (357 aa).

A signal peptide spans 1–15 (MKKYLLLALLPFLYA). Cysteine 16 carries N-palmitoyl cysteine lipidation. Cysteine 16 carries the S-diacylglycerol cysteine lipid modification.

It belongs to the transglycosylase Slt family.

The protein resides in the cell outer membrane. It carries out the reaction Exolytic cleavage of the (1-&gt;4)-beta-glycosidic linkage between N-acetylmuramic acid (MurNAc) and N-acetylglucosamine (GlcNAc) residues in peptidoglycan, from either the reducing or the non-reducing ends of the peptidoglycan chains, with concomitant formation of a 1,6-anhydrobond in the MurNAc residue.. Functionally, murein-degrading enzyme. May play a role in recycling of muropeptides during cell elongation and/or cell division. This chain is Membrane-bound lytic murein transglycosylase C, found in Haemophilus influenzae (strain PittGG).